The sequence spans 112 residues: Diuretic hormone class 2 (112 aa).

The signal sequence occupies residues 1 to 24; that stretch reads MVRATCLLASCVLFALLLIVPASA. Residues 25–71 constitute a propeptide that is removed on maturation; it reads YPRYPSNYFREEGQYEPEEIMDMLNRLGNLIQMERKMENYKEDITSE. A Proline amide modification is found at proline 104. The propeptide occupies 108–112; sequence RRDAH.

In terms of tissue distribution, expressed in corpora cardiaca (CC), corpora allata (CA), antennal lobe (AL) and gnathal ganglion (GNG) (at protein level). Expression in CC, CA and AL detected in most animals, expression in GNG in few animals (at protein level).

It localises to the secreted. Functionally, regulation of fluid secretion. Stimulates Malpighian tubule fluid secretion. The polypeptide is Diuretic hormone class 2 (Agrotis ipsilon (Black cutworm moth)).